Here is a 134-residue protein sequence, read N- to C-terminus: DNA-binding protein H-NS, plasmid (134 aa).

A coiled-coil region spans residues 23-67; sequence LEILEELLEKLSVVVEERRQEESSKEAELKARLEKIESLRQLMLE. The segment at 77–96 is disordered; sequence SSFSAKSGAPKKVREPRPAK. Residues 112–117 mediate DNA binding; that stretch reads QGRTPK.

Belongs to the histone-like protein H-NS family. Homodimer that oligomerizes on DNA into higher-order complexes that form bridges between disparate regions of DNA compacting it. Interacts with Hha, YdgT and StpA.

The protein localises to the cytoplasm. Its subcellular location is the nucleoid. Its function is as follows. A DNA-binding protein implicated in transcriptional repression and chromosome organization and compaction. Binds DNA, modifying gene expression, especially non-core genes. Does not regulate the same set of genes as its chromosomal counterpart (tested in S.typhimurium strain SL1344 / SV5015, chromosomal H-NS protein is AC A0A0H3NBY9). Thus it has a not-completely overlapping set of gene targets compared to its chromosomal homolog; many of these target genes are either plasmid-encoded or acquired by horizontally transferred genes (HTG). This protein can function in the absence of H-NS-modulating protein Hha (either chromosomal or plasmid-encoded), although many HTG genes are regulated by an H-NS/Hha complex. Binds nucleation sites in AT-rich DNA and bridges them, forming higher-order nucleoprotein complexes and condensing the chromosome. A subset of genes are repressed by H-NS in association with Hha and/or Cnu (ydgT). The chain is DNA-binding protein H-NS, plasmid (hns) from Salmonella typhi.